Here is a 462-residue protein sequence, read N- to C-terminus: Glutamate--tRNA ligase 1 (462 aa).

The 'HIGH' region motif lies at 8-18; sequence PSPTGYLHIGG. The 'KMSKS' region signature appears at 237 to 241; sequence KLSKR. K240 provides a ligand contact to ATP.

It belongs to the class-I aminoacyl-tRNA synthetase family. Glutamate--tRNA ligase type 1 subfamily. As to quaternary structure, monomer.

The protein resides in the cytoplasm. It catalyses the reaction tRNA(Glu) + L-glutamate + ATP = L-glutamyl-tRNA(Glu) + AMP + diphosphate. In terms of biological role, catalyzes the attachment of glutamate to tRNA(Glu) in a two-step reaction: glutamate is first activated by ATP to form Glu-AMP and then transferred to the acceptor end of tRNA(Glu). This chain is Glutamate--tRNA ligase 1, found in Sulfurimonas denitrificans (strain ATCC 33889 / DSM 1251) (Thiomicrospira denitrificans (strain ATCC 33889 / DSM 1251)).